A 617-amino-acid chain; its full sequence is Dihydroxy-acid dehydratase (617 aa).

Aspartate 81 lines the Mg(2+) pocket. Cysteine 122 lines the [2Fe-2S] cluster pocket. Mg(2+) is bound by residues aspartate 123 and lysine 124. Residue lysine 124 is modified to N6-carboxylysine. Cysteine 195 provides a ligand contact to [2Fe-2S] cluster. A Mg(2+)-binding site is contributed by glutamate 491. The active-site Proton acceptor is the serine 517.

It belongs to the IlvD/Edd family. Homodimer. The cofactor is [2Fe-2S] cluster. Requires Mg(2+) as cofactor.

It carries out the reaction (2R)-2,3-dihydroxy-3-methylbutanoate = 3-methyl-2-oxobutanoate + H2O. The catalysed reaction is (2R,3R)-2,3-dihydroxy-3-methylpentanoate = (S)-3-methyl-2-oxopentanoate + H2O. Its pathway is amino-acid biosynthesis; L-isoleucine biosynthesis; L-isoleucine from 2-oxobutanoate: step 3/4. It functions in the pathway amino-acid biosynthesis; L-valine biosynthesis; L-valine from pyruvate: step 3/4. Functions in the biosynthesis of branched-chain amino acids. Catalyzes the dehydration of (2R,3R)-2,3-dihydroxy-3-methylpentanoate (2,3-dihydroxy-3-methylvalerate) into 2-oxo-3-methylpentanoate (2-oxo-3-methylvalerate) and of (2R)-2,3-dihydroxy-3-methylbutanoate (2,3-dihydroxyisovalerate) into 2-oxo-3-methylbutanoate (2-oxoisovalerate), the penultimate precursor to L-isoleucine and L-valine, respectively. This chain is Dihydroxy-acid dehydratase, found in Nitrosococcus oceani (strain ATCC 19707 / BCRC 17464 / JCM 30415 / NCIMB 11848 / C-107).